Here is a 65-residue protein sequence, read N- to C-terminus: Weak neurotoxin 6 (65 aa).

5 disulfides stabilise this stretch: Cys-3/Cys-24, Cys-6/Cys-11, Cys-17/Cys-42, Cys-46/Cys-57, and Cys-58/Cys-63.

The protein belongs to the three-finger toxin family. Ancestral subfamily. Orphan group II sub-subfamily. As to expression, expressed by the venom gland.

The protein resides in the secreted. In terms of biological role, binds with low affinity to muscular (alpha-1-beta-1-delta-epsilon/CHRNA1-CHRNB1-CHRND-CHRNE) and very low affinity to neuronal (alpha-7/CHRNA7) nicotinic acetylcholine receptor (nAChR). The sequence is that of Weak neurotoxin 6 from Naja naja (Indian cobra).